A 285-amino-acid chain; its full sequence is 2-hydroxy-6-oxononadienedioate/2-hydroxy-6-oxononatrienedioate hydrolase 1 (285 aa).

His-265 functions as the Proton acceptor in the catalytic mechanism.

Belongs to the AB hydrolase superfamily. MhpC family. As to quaternary structure, homodimer.

The enzyme catalyses (2Z,4E)-2-hydroxy-6-oxonona-2,4-dienedioate + H2O = (2Z)-2-hydroxypenta-2,4-dienoate + succinate + H(+). It catalyses the reaction (2Z,4E,7E)-2-hydroxy-6-oxonona-2,4,7-trienedioate + H2O = (2Z)-2-hydroxypenta-2,4-dienoate + fumarate + H(+). It functions in the pathway aromatic compound metabolism; 3-phenylpropanoate degradation. In terms of biological role, catalyzes the cleavage of the C5-C6 bond of 2-hydroxy-6-oxononadienedioate and 2-hydroxy-6-oxononatrienedioate, a dienol ring fission product of the bacterial meta-cleavage pathway for degradation of phenylpropionic acid. This chain is 2-hydroxy-6-oxononadienedioate/2-hydroxy-6-oxononatrienedioate hydrolase 1, found in Pseudomonas putida (Arthrobacter siderocapsulatus).